Consider the following 49-residue polypeptide: Large ribosomal subunit protein bL33 (49 aa).

Belongs to the bacterial ribosomal protein bL33 family.

In Pelotomaculum thermopropionicum (strain DSM 13744 / JCM 10971 / SI), this protein is Large ribosomal subunit protein bL33.